The primary structure comprises 586 residues: Lamin-B1 (586 aa).

The tract at residues 1–31 is disordered; it reads MATATPVPPRMGSRAGGPTTPLSPTRLSRLQ. The residue at position 2 (A2) is an N-acetylalanine. Residues 2 to 34 are head; sequence ATATPVPPRMGSRAGGPTTPLSPTRLSRLQEKE. 2 positions are modified to phosphothreonine: T3 and T5. R14 carries the omega-N-methylarginine modification. At T20 the chain carries Phosphothreonine. S23 bears the Phosphoserine mark. T25 bears the Phosphothreonine mark. Phosphoserine is present on S28. In terms of domain architecture, IF rod spans 32–388; sequence EKEELRELND…KLLEGEEERL (357 aa). A coil 1A region spans residues 35-69; the sequence is ELRELNDRLAVYIDKVRSLETENSALQLQVTEREE. The interval 70–81 is linker 1; it reads VRGRELTGLKAL. The segment at 82–215 is coil 1B; the sequence is YETELADARR…EFRKSMYEEE (134 aa). K102 participates in a covalent cross-link: Glycyl lysine isopeptide (Lys-Gly) (interchain with G-Cter in SUMO2). K111 is modified (N6-acetyllysine). Residue K123 forms a Glycyl lysine isopeptide (Lys-Gly) (interchain with G-Cter in SUMO2) linkage. S126 carries the phosphoserine modification. K145 is covalently cross-linked (Glycyl lysine isopeptide (Lys-Gly) (interchain with G-Cter in SUMO2)). K157 is subject to N6-acetyllysine; alternate. K157 participates in a covalent cross-link: Glycyl lysine isopeptide (Lys-Gly) (interchain with G-Cter in SUMO2); alternate. S158 carries the phosphoserine modification. K181 participates in a covalent cross-link: Glycyl lysine isopeptide (Lys-Gly) (interchain with G-Cter in SUMO2). A phosphoserine mark is found at S200, S210, and S232. The segment at 216–243 is linker 2; that stretch reads INETRRKHETRLVEVDSGRQIEYEYKLA. Residues K241 and K261 each participate in a glycyl lysine isopeptide (Lys-Gly) (interchain with G-Cter in SUMO2) cross-link. A coil 2 region spans residues 244–386; it reads QALHEMREQH…YRKLLEGEEE (143 aa). At K271 the chain carries N6-acetyllysine; alternate. Residue K271 forms a Glycyl lysine isopeptide (Lys-Gly) (interchain with G-Cter in SUMO2); alternate linkage. S278 and S302 each carry phosphoserine. Residue K312 forms a Glycyl lysine isopeptide (Lys-Gly) (interchain with G-Cter in SUMO2) linkage. K330 carries the N6-acetyllysine; alternate modification. K330 participates in a covalent cross-link: Glycyl lysine isopeptide (Lys-Gly) (interchain with G-Cter in SUMO2); alternate. Phosphoserine occurs at positions 375 and 393. Residues 387-586 form a tail region; that stretch reads RLKLSPSPSS…RASNRSCAIM (200 aa). The tract at residues 388–432 is disordered; that stretch reads LKLSPSPSSRVTVSRASSSRSVRTTRGKRKRVDVEESEASSSVSI. The segment covering 390-409 has biased composition (low complexity); the sequence is LSPSPSSRVTVSRASSSRSV. O-linked (GlcNAc) threonine glycosylation occurs at T399. Omega-N-methylarginine is present on R413. A Nuclear localization signal motif is present at residues 415 to 420; it reads KRKRVD. The 117-residue stretch at 430-546 folds into the LTD domain; that stretch reads VSISHSASAT…EEVAQRSTVF (117 aa). An N6-acetyllysine modification is found at K483. Residue K532 forms a Glycyl lysine isopeptide (Lys-Gly) (interchain with G-Cter in SUMO2) linkage. Residue S534 is modified to Phosphoserine. K547 is covalently cross-linked (Glycyl lysine isopeptide (Lys-Gly) (interchain with G-Cter in SUMO2)). T575 bears the Phosphothreonine mark. C583 is subject to Cysteine methyl ester. C583 is lipidated: S-farnesyl cysteine. Positions 584–586 are cleaved as a propeptide — removed in mature form; the sequence is AIM.

This sequence belongs to the intermediate filament family. In terms of assembly, homodimer. Lamin dimers then assemble into dimeric head-to-tail polymers. Ultimately, two head-to-tail polymers assemble laterally into a protofilament with a uniformly shaped rod of 3.5 nm in diameter. Interacts with SPAG4 and SEPT12. B-type lamins undergo a series of modifications, such as farnesylation and phosphorylation. Increased phosphorylation of the lamins occurs before envelope disintegration and probably plays a role in regulating lamin associations. In terms of processing, phosphorylation plays a key role in lamin organization, subcellular localization and nuclear envelope disintegration. Phosphorylation by CDK1 at Ser-23 and Ser-393 at the onset of mitosis drives lamin disassembly and nuclear envelope breakdown.

The protein localises to the nucleus lamina. Functionally, lamins are intermediate filament proteins that assemble into a filamentous meshwork, and which constitute the major components of the nuclear lamina, a fibrous layer on the nucleoplasmic side of the inner nuclear membrane. Lamins provide a framework for the nuclear envelope, bridging the nuclear envelope and chromatin, thereby playing an important role in nuclear assembly, chromatin organization, nuclear membrane and telomere dynamics. The structural integrity of the lamina is strictly controlled by the cell cycle, as seen by the disintegration and formation of the nuclear envelope in prophase and telophase, respectively. This chain is Lamin-B1 (LMNB1), found in Homo sapiens (Human).